Consider the following 415-residue polypeptide: Histidine--tRNA ligase (415 aa).

This sequence belongs to the class-II aminoacyl-tRNA synthetase family. Homodimer.

The protein localises to the cytoplasm. The catalysed reaction is tRNA(His) + L-histidine + ATP = L-histidyl-tRNA(His) + AMP + diphosphate + H(+). The chain is Histidine--tRNA ligase from Rickettsia canadensis (strain McKiel).